The sequence spans 222 residues: Cytidylate kinase (222 aa).

12–20 is an ATP binding site; it reads GPSGAGKGT.

The protein belongs to the cytidylate kinase family. Type 1 subfamily.

The protein resides in the cytoplasm. It catalyses the reaction CMP + ATP = CDP + ADP. The catalysed reaction is dCMP + ATP = dCDP + ADP. This is Cytidylate kinase from Methylococcus capsulatus (strain ATCC 33009 / NCIMB 11132 / Bath).